A 679-amino-acid chain; its full sequence is MHDKKSPMANSHYLKNLKQQFRNKNLIETTIHLVKCNDHDSLAFLARTYGVPPQLRHVVWPILLKYHPMCISPNITSNTISWDPITNDFILNDPFLKSKAPTDKQDKSDDENILPYDIESIILHDLKKYFHSRSNPAGSSSNANTTNIATPTPVSSSDASTISSMEVLSPSLDYEFQIIETLKNAIVKFLLKWSKIFKYESGLAWIALGLAEWYPIYPYETMSPFNETHSFYEVEDYVVLSGRKHALLSTNNGNNGNSNSSSNNTNNNNTNITSGMHNLSINTNTSLHNSPYISHTLSYLYKEYPLPFELRSKLPTKPIFSFSALFERLALVILHCPDTILAHKQLKNDSNASSSSKANSNFNTNYFPIISGGDLSFQTQVFFKVFSSILPELYQPLTEESSLQPSSSRNSWIYWWLKCSGAKALQRQDRGRVWDLLLGWRPKPNMDTINFFLNYNDKKMDHLYHDTPQCDNEQYWMKDWIALYNNDPFWFPDLDSMALGSKKFPYDYSVFKELILRNRYGGTQSKAQKDNTVPSPGSDSNDKSELKLPFSSIDPHMQLIFIFIAILQFNEFKLLEFEEAEIPEFLNNVPLLTKFDDSSYRKLYENTESSITSLPSSPTTSTMASLQSSSNSSAHISNYHMLIEVGNDAKASHCFDDLLNMAGDIWRKWLWRELEESSL.

The region spanning 50 to 441 is the Rab-GAP TBC domain; sequence GVPPQLRHVV…RVWDLLLGWR (392 aa). A compositionally biased stretch (low complexity) spans 135 to 153; the sequence is NPAGSSSNANTTNIATPTP. 3 disordered regions span residues 135–159, 250–271, and 524–544; these read NPAG…SSDA, TNNG…NNTN, and QSKA…NDKS. Positions 524–539 are enriched in polar residues; that stretch reads QSKAQKDNTVPSPGSD.

Belongs to the OCA5 family.

The protein resides in the cytoplasm. Functionally, required for replication of brome mosaic virus (BMV), a positive-strand RNA virus. This is Oxidant-induced cell-cycle arrest protein 5 (OCA5) from Saccharomyces cerevisiae (strain Lalvin EC1118 / Prise de mousse) (Baker's yeast).